The following is a 148-amino-acid chain: Putative cyclin-dependent kinase inhibitor SPL2 (148 aa).

2 positions are modified to phosphoserine: serine 59 and serine 86.

Its subcellular location is the cytoplasmic granule. The protein resides in the cytoplasm. Its function is as follows. Putative cyclin-dependent kinase (CDK) inhibitor necessary and sufficient for PHO pathway-dependent down-regulation of low-affinity phosphate transport. This chain is Putative cyclin-dependent kinase inhibitor SPL2 (SPL2), found in Saccharomyces cerevisiae (strain YJM789) (Baker's yeast).